The following is a 454-amino-acid chain: Zeatin O-xylosyltransferase (454 aa).

The protein belongs to the UDP-glycosyltransferase family. High level in young seeds, less in older seeds and very low in roots.

It carries out the reaction zeatin + UDP-alpha-D-xylose = O-beta-D-xylosylzeatin + UDP + H(+). In terms of biological role, utilizes UDP-xylose as the sugar donor and catalyzes the formation of o-xylosylzeatin from zeatin. Does not act on UDP-glucose. The polypeptide is Zeatin O-xylosyltransferase (Phaseolus vulgaris (Kidney bean)).